Reading from the N-terminus, the 203-residue chain is GTP-binding protein ypt1 (203 aa).

GTP contacts are provided by residues 15-23 (GDSGVGKSC), 33-40 (YTESYIST), 63-67 (DTAGQ), 121-124 (NKSD), and 151-153 (SAK). The short motif at 37-45 (YISTIGVDF) is the Effector region element. Residues 180-203 (NNTKASVNVSPGHGVSNNSSGGCC) are disordered. S-geranylgeranyl cysteine attachment occurs at residues Cys202 and Cys203.

The protein belongs to the small GTPase superfamily. Rab family.

The protein localises to the endoplasmic reticulum membrane. Its subcellular location is the golgi apparatus membrane. The protein resides in the cytoplasm. It is found in the preautophagosomal structure membrane. With respect to regulation, rab activation is generally mediated by a guanine exchange factor (GEF), while inactivation through hydrolysis of bound GTP is catalyzed by a GTPase activating protein (GAP). Its function is as follows. The small GTPases Rab are key regulators of intracellular membrane trafficking, from the formation of transport vesicles to their fusion with membranes. Rabs cycle between an inactive GDP-bound form and an active GTP-bound form that is able to recruit to membranes different set of downstream effectors directly responsible for vesicle formation, movement, tethering and fusion. Ypt-1 regulates the trafficking of secretory vesicles from the endoplasmic reticulum (ER) to the Golgi. Plays a role in the initial events of the autophagic vacuole development which take place at specialized regions of the endoplasmic reticulum. Also involved in the recycling of membrane proteins. The polypeptide is GTP-binding protein ypt1 (ypt-1) (Neurospora crassa (strain ATCC 24698 / 74-OR23-1A / CBS 708.71 / DSM 1257 / FGSC 987)).